We begin with the raw amino-acid sequence, 318 residues long: Vomeronasal type-1 receptor A11 (318 aa).

Residues 1 to 32 (MSEILFFSPQPLFSHMMNKNSRLHTHSNIKNT) lie on the Extracellular side of the membrane. A helical membrane pass occupies residues 33–53 (FFSEIGIGISGNSFLLLFHIL). At 54–65 (KFIRGHRPRLTD) the chain is on the cytoplasmic side. Residues 66–86 (LPIGLLSLIHLLMLLLMAFIA) traverse the membrane as a helical segment. Residues 87-101 (TDIFISRRGWDGIIC) are Extracellular-facing. An intrachain disulfide couples cysteine 101 to cysteine 188. The chain crosses the membrane as a helical span at residues 102-118 (KFLVYLYGVLRGLSLCT). At 119–147 (TSMLSVLQAIILSPRSSCLAKLKHKSPHH) the chain is on the cytoplasmic side. The helical transmembrane segment at 148-168 (ISCAIIFLSVLYMLISSHILL) threads the bilayer. The Extracellular segment spans residues 169 to 206 (SITATPNLTMNDFLYVSQSCSLLPLSYLVQSMYSTLLA). A glycan (N-linked (GlcNAc...) asparagine) is linked at asparagine 175. Residues 207–227 (LREVFLISLMVLSTLYMVVLL) traverse the membrane as a helical segment. Over 228 to 254 (CRHRKQAQHLQGTSLSPKASAEQRATQ) the chain is Cytoplasmic. The chain crosses the membrane as a helical span at residues 255-275 (TILMLMTFFVLMSIFDSIVSC). At 276–285 (SRTMFLDDPT) the chain is on the extracellular side. The chain crosses the membrane as a helical span at residues 286 to 306 (SYSIHIFVMHIYATVSPFVFM). Residues 307–318 (STEKHIVNILRG) lie on the Cytoplasmic side of the membrane.

The protein belongs to the G-protein coupled receptor 1 family.

It localises to the cell membrane. Putative pheromone receptor implicated in the regulation of social and reproductive behavior. In Mus musculus (Mouse), this protein is Vomeronasal type-1 receptor A11.